Reading from the N-terminus, the 271-residue chain is Formamidopyrimidine-DNA glycosylase (271 aa).

The Schiff-base intermediate with DNA role is filled by P2. E3 serves as the catalytic Proton donor. K57 functions as the Proton donor; for beta-elimination activity in the catalytic mechanism. Residues H90, R109, and K151 each contribute to the DNA site. Residues 236 to 270 (HVYGRGGETCTQCGNLLSEIRLGQRTTVFCGICQT) form an FPG-type zinc finger. R260 serves as the catalytic Proton donor; for delta-elimination activity.

It belongs to the FPG family. In terms of assembly, monomer. The cofactor is Zn(2+).

The catalysed reaction is Hydrolysis of DNA containing ring-opened 7-methylguanine residues, releasing 2,6-diamino-4-hydroxy-5-(N-methyl)formamidopyrimidine.. The enzyme catalyses 2'-deoxyribonucleotide-(2'-deoxyribose 5'-phosphate)-2'-deoxyribonucleotide-DNA = a 3'-end 2'-deoxyribonucleotide-(2,3-dehydro-2,3-deoxyribose 5'-phosphate)-DNA + a 5'-end 5'-phospho-2'-deoxyribonucleoside-DNA + H(+). Involved in base excision repair of DNA damaged by oxidation or by mutagenic agents. Acts as a DNA glycosylase that recognizes and removes damaged bases. Has a preference for oxidized purines, such as 7,8-dihydro-8-oxoguanine (8-oxoG). Has AP (apurinic/apyrimidinic) lyase activity and introduces nicks in the DNA strand. Cleaves the DNA backbone by beta-delta elimination to generate a single-strand break at the site of the removed base with both 3'- and 5'-phosphates. This Shewanella sp. (strain MR-4) protein is Formamidopyrimidine-DNA glycosylase.